Here is a 370-residue protein sequence, read N- to C-terminus: MATHKLLLLPGDGIGTEVMAEVKRLIDWLNAQGIAHFETEDGLVGGAAYDADKVAITDATMAKAQASDAVIFGAVGGAKWDGVPYEARPEAGLLRLRKDLGLFANLRPAVCYPALADSSSLKREVVEGLDIMIVRELTGGVYFGEPKTITDLGNGQKRAIDTQVYDSYEIDRIARVAFDLARKRRNKVTSMEKRNVMKSGVLWNEVVTRVHAEDYKDVQLEHQLADSGGMNLVKWPKQFDVIVTDNLFGDILSDIAAMLTGSLGMLPSASLGAVDANTGKRKSMYEPVHGSAPDIAGKGLANPVAMLASFGMALRYSLDMGELADKLDAAIAAVLAKGLRTADIKSEGSTVISTSQMGEAILKEMQALHA.

77 to 90 (GAKWDGVPYEARPE) is an NAD(+) binding site. Positions 97, 107, 135, and 226 each coordinate substrate. Residues aspartate 226, aspartate 250, and aspartate 254 each coordinate Mg(2+). Residue 290–302 (GSAPDIAGKGLAN) participates in NAD(+) binding.

This sequence belongs to the isocitrate and isopropylmalate dehydrogenases family. LeuB type 1 subfamily. In terms of assembly, homodimer. Requires Mg(2+) as cofactor. Mn(2+) is required as a cofactor.

It is found in the cytoplasm. The enzyme catalyses (2R,3S)-3-isopropylmalate + NAD(+) = 4-methyl-2-oxopentanoate + CO2 + NADH. It participates in amino-acid biosynthesis; L-leucine biosynthesis; L-leucine from 3-methyl-2-oxobutanoate: step 3/4. In terms of biological role, catalyzes the oxidation of 3-carboxy-2-hydroxy-4-methylpentanoate (3-isopropylmalate) to 3-carboxy-4-methyl-2-oxopentanoate. The product decarboxylates to 4-methyl-2 oxopentanoate. The protein is 3-isopropylmalate dehydrogenase of Rhodopseudomonas palustris (strain BisB18).